Here is a 206-residue protein sequence, read N- to C-terminus: Outer-membrane lipoprotein carrier protein (206 aa).

An N-terminal signal peptide occupies residues 1–21 (MKKLLCAVLLSPLLYSNAVLA).

This sequence belongs to the LolA family. As to quaternary structure, monomer.

The protein resides in the periplasm. Participates in the translocation of lipoproteins from the inner membrane to the outer membrane. Only forms a complex with a lipoprotein if the residue after the N-terminal Cys is not an aspartate (The Asp acts as a targeting signal to indicate that the lipoprotein should stay in the inner membrane). The chain is Outer-membrane lipoprotein carrier protein from Shewanella sp. (strain MR-7).